Here is a 652-residue protein sequence, read N- to C-terminus: Acetyl-coenzyme A synthetase (652 aa).

Residues 191–194 (RAGR), threonine 311, and asparagine 335 contribute to the CoA site. ATP contacts are provided by residues 387-389 (GEP), 411-416 (DTWWQT), aspartate 500, and arginine 515. Serine 523 contacts CoA. Residue arginine 526 coordinates ATP. 3 residues coordinate Mg(2+): valine 537, histidine 539, and isoleucine 542. Arginine 584 provides a ligand contact to CoA. Lysine 609 is subject to N6-acetyllysine.

It belongs to the ATP-dependent AMP-binding enzyme family. The cofactor is Mg(2+). Post-translationally, acetylated. Deacetylation by the SIR2-homolog deacetylase activates the enzyme.

The enzyme catalyses acetate + ATP + CoA = acetyl-CoA + AMP + diphosphate. Functionally, catalyzes the conversion of acetate into acetyl-CoA (AcCoA), an essential intermediate at the junction of anabolic and catabolic pathways. Acs undergoes a two-step reaction. In the first half reaction, Acs combines acetate with ATP to form acetyl-adenylate (AcAMP) intermediate. In the second half reaction, it can then transfer the acetyl group from AcAMP to the sulfhydryl group of CoA, forming the product AcCoA. Enables the cell to use acetate during aerobic growth to generate energy via the TCA cycle, and biosynthetic compounds via the glyoxylate shunt. Acetylates CheY, the response regulator involved in flagellar movement and chemotaxis. This is Acetyl-coenzyme A synthetase from Yersinia pestis.